The primary structure comprises 523 residues: 2-isopropylmalate synthase (523 aa).

Residues 5 to 267 (VIIFDTTLRD…HTNINHHEIW (263 aa)) form the Pyruvate carboxyltransferase domain. Positions 14, 202, 204, and 238 each coordinate Mn(2+). Positions 392–523 (RLDYFSVQSG…QNKENNKETV (132 aa)) are regulatory domain.

Belongs to the alpha-IPM synthase/homocitrate synthase family. LeuA type 1 subfamily. In terms of assembly, homodimer. Mn(2+) is required as a cofactor.

The protein localises to the cytoplasm. It catalyses the reaction 3-methyl-2-oxobutanoate + acetyl-CoA + H2O = (2S)-2-isopropylmalate + CoA + H(+). Its pathway is amino-acid biosynthesis; L-leucine biosynthesis; L-leucine from 3-methyl-2-oxobutanoate: step 1/4. Its function is as follows. Catalyzes the condensation of the acetyl group of acetyl-CoA with 3-methyl-2-oxobutanoate (2-ketoisovalerate) to form 3-carboxy-3-hydroxy-4-methylpentanoate (2-isopropylmalate). The protein is 2-isopropylmalate synthase of Salmonella dublin (strain CT_02021853).